Reading from the N-terminus, the 434-residue chain is Vi polysaccharide export inner-membrane protein VexD (434 aa).

Basic and acidic residues predominate over residues 1–50 (MENSERIKKWKEERAKVAQESRASRLQQKEDERALRQTEKSADAKSHHNP). The segment at 1–58 (MENSERIKKWKEERAKVAQESRASRLQQKEDERALRQTEKSADAKSHHNPDAGWSATD) is disordered. The next 2 helical transmembrane spans lie at 84–104 (LFLYIALPLLVIMLMSWILTS) and 409–429 (WLLFFVLLGITYLVTSLLITI).

The protein belongs to the BexC/CtrB/KpsE family.

The protein localises to the cell inner membrane. May form an ATP-driven capsule polysaccharide export apparatus, in association with the VexA, VexB and VexC proteins. This is Vi polysaccharide export inner-membrane protein VexD (vexD) from Salmonella typhi.